The chain runs to 93 residues: ATP synthase subunit c (93 aa).

Transmembrane regions (helical) follow at residues 13-33 and 58-78; these read AIGVGIAIGVAACGGGIGMGI and ISLAMIEAQVIYALVIVFILL.

It belongs to the ATPase C chain family. In terms of assembly, F-type ATPases have 2 components, F(1) - the catalytic core - and F(0) - the membrane proton channel. F(1) has five subunits: alpha(3), beta(3), gamma(1), delta(1), epsilon(1). F(0) has three main subunits: a(1), b(2) and c(10-14). The alpha and beta chains form an alternating ring which encloses part of the gamma chain. F(1) is attached to F(0) by a central stalk formed by the gamma and epsilon chains, while a peripheral stalk is formed by the delta and b chains.

The protein localises to the cell inner membrane. Functionally, f(1)F(0) ATP synthase produces ATP from ADP in the presence of a proton or sodium gradient. F-type ATPases consist of two structural domains, F(1) containing the extramembraneous catalytic core and F(0) containing the membrane proton channel, linked together by a central stalk and a peripheral stalk. During catalysis, ATP synthesis in the catalytic domain of F(1) is coupled via a rotary mechanism of the central stalk subunits to proton translocation. In terms of biological role, key component of the F(0) channel; it plays a direct role in translocation across the membrane. A homomeric c-ring of between 10-14 subunits forms the central stalk rotor element with the F(1) delta and epsilon subunits. The protein is ATP synthase subunit c of Campylobacter hominis (strain ATCC BAA-381 / DSM 21671 / CCUG 45161 / LMG 19568 / NCTC 13146 / CH001A).